The following is a 160-amino-acid chain: Methyl-coenzyme M reductase operon protein D (160 aa).

In terms of assembly, MCR is composed of three subunits: alpha, beta, and gamma. The function of proteins C and D is not known.

The chain is Methyl-coenzyme M reductase operon protein D (mcrD) from Methanococcus vannielii.